Here is a 193-residue protein sequence, read N- to C-terminus: Ion-translocating oxidoreductase complex subunit A (193 aa).

Transmembrane regions (helical) follow at residues 5–25 (LLLL…FLGL), 39–59 (IGMG…AYLV), 67–87 (LGIE…VVQF), 102–122 (LLGI…VALL), 134–154 (IIYG…FASM), and 171–191 (SIAM…TGLV).

The protein belongs to the NqrDE/RnfAE family. In terms of assembly, the complex is composed of six subunits: RnfA, RnfB, RnfC, RnfD, RnfE and RnfG.

The protein localises to the cell inner membrane. Its function is as follows. Part of a membrane-bound complex that couples electron transfer with translocation of ions across the membrane. This is Ion-translocating oxidoreductase complex subunit A from Vibrio cholerae serotype O1 (strain ATCC 39315 / El Tor Inaba N16961).